We begin with the raw amino-acid sequence, 30 residues long: Trypsin inhibitor 7 (30 aa).

3 cysteine pairs are disulfide-bonded: Cys-4–Cys-21, Cys-11–Cys-23, and Cys-17–Cys-29.

It belongs to the protease inhibitor I7 (squash-type serine protease inhibitor) family.

Its subcellular location is the secreted. Its function is as follows. Strongly inhibits trypsin, weakly inhibits chymotrypsin. The sequence is that of Trypsin inhibitor 7 from Cyclanthera pedata (Achocha).